A 235-amino-acid chain; its full sequence is Probable inactive serine protease 37 (235 aa).

The signal sequence occupies residues 1-19 (MKYVFYLGVLAGTFFFADS). In terms of domain architecture, Peptidase S1 spans 20–233 (SVQKEDPAPY…YVSWIENTAK (214 aa)). 3 disulfide bridges follow: Cys-40-Cys-56, Cys-131-Cys-198, and Cys-163-Cys-177.

Belongs to the peptidase S1 family. Testis-specific. Expressed in spermatids (at protein level).

The protein localises to the cytoplasmic vesicle. It localises to the secretory vesicle. It is found in the acrosome. Its subcellular location is the secreted. In terms of biological role, plays a role in male fertility. May have a role in sperm migration or binding to zona-intact eggs. Involved in the activation of the proacrosin/acrosin system. The protein is Probable inactive serine protease 37 of Homo sapiens (Human).